The sequence spans 453 residues: Tetrahydroanabasine acetyltransferase (453 aa).

Catalysis depends on proton acceptor residues H163 and D388.

This sequence belongs to the plant acyltransferase family. In terms of assembly, monomer.

The catalysed reaction is tetrahydroanabasine + acetyl-CoA = ammodendrine + CoA. It functions in the pathway alkaloid biosynthesis. In terms of biological role, tetrahydroanabasine acetyltransferase involved in the accumulation of quinolizidine type antinutritional alkaloids (QAs). QAs impart a bitter taste to plants, acting as repellents and toxicants for herbivores and predators, and possess a variety of pharmacological effects, including sedative, anticonvulsant, anti-inflammatory, antiviral, antitumor, antipyretic, anti-hepatitis B, antifibrotic, antiallergic, antidiarrheal, analgesic and antimicrobial activities. Mediates the conversion of tetrahydroanabasine into ammodendrine. This Lupinus angustifolius (Narrow-leaved blue lupine) protein is Tetrahydroanabasine acetyltransferase.